The primary structure comprises 217 residues: ATP-binding protein BexA (217 aa).

Residues Ile-2–Lys-217 enclose the ABC transporter domain. Gly-38–Ser-45 serves as a coordination point for ATP.

Belongs to the ABC transporter superfamily.

It localises to the cell inner membrane. In terms of biological role, putative ATP-binding protein, and an energy-coupling component of capsule polysaccharide export apparatus. The sequence is that of ATP-binding protein BexA (bexA) from Haemophilus influenzae.